A 617-amino-acid chain; its full sequence is Dihydroxy-acid dehydratase (617 aa).

Aspartate 81 is a Mg(2+) binding site. Cysteine 122 provides a ligand contact to [2Fe-2S] cluster. 2 residues coordinate Mg(2+): aspartate 123 and lysine 124. Lysine 124 carries the post-translational modification N6-carboxylysine. Cysteine 195 serves as a coordination point for [2Fe-2S] cluster. Glutamate 491 serves as a coordination point for Mg(2+). Serine 517 (proton acceptor) is an active-site residue.

Belongs to the IlvD/Edd family. In terms of assembly, homodimer. Requires [2Fe-2S] cluster as cofactor. The cofactor is Mg(2+).

It carries out the reaction (2R)-2,3-dihydroxy-3-methylbutanoate = 3-methyl-2-oxobutanoate + H2O. The enzyme catalyses (2R,3R)-2,3-dihydroxy-3-methylpentanoate = (S)-3-methyl-2-oxopentanoate + H2O. It functions in the pathway amino-acid biosynthesis; L-isoleucine biosynthesis; L-isoleucine from 2-oxobutanoate: step 3/4. Its pathway is amino-acid biosynthesis; L-valine biosynthesis; L-valine from pyruvate: step 3/4. In terms of biological role, functions in the biosynthesis of branched-chain amino acids. Catalyzes the dehydration of (2R,3R)-2,3-dihydroxy-3-methylpentanoate (2,3-dihydroxy-3-methylvalerate) into 2-oxo-3-methylpentanoate (2-oxo-3-methylvalerate) and of (2R)-2,3-dihydroxy-3-methylbutanoate (2,3-dihydroxyisovalerate) into 2-oxo-3-methylbutanoate (2-oxoisovalerate), the penultimate precursor to L-isoleucine and L-valine, respectively. In Buchnera aphidicola subsp. Diuraphis noxia, this protein is Dihydroxy-acid dehydratase.